Reading from the N-terminus, the 313-residue chain is Ribosomal RNA small subunit methyltransferase H (313 aa).

S-adenosyl-L-methionine is bound by residues 35-37, D55, F80, D102, and Q109; that span reads GGH.

This sequence belongs to the methyltransferase superfamily. RsmH family.

The protein localises to the cytoplasm. The enzyme catalyses cytidine(1402) in 16S rRNA + S-adenosyl-L-methionine = N(4)-methylcytidine(1402) in 16S rRNA + S-adenosyl-L-homocysteine + H(+). Functionally, specifically methylates the N4 position of cytidine in position 1402 (C1402) of 16S rRNA. The polypeptide is Ribosomal RNA small subunit methyltransferase H (Shewanella putrefaciens (strain CN-32 / ATCC BAA-453)).